Reading from the N-terminus, the 725-residue chain is Methionine--tRNA ligase (725 aa).

The 'HIGH' region signature appears at 27 to 37 (PYANGQIHIGH). The Zn(2+) site is built by C158, C161, C171, and C174. The short motif at 348-352 (KMSKS) is the 'KMSKS' region element. Residue K351 participates in ATP binding. A tRNA-binding domain is found at 619 to 725 (DFAKIDLRIA…SGAKPGMRVK (107 aa)).

This sequence belongs to the class-I aminoacyl-tRNA synthetase family. MetG type 1 subfamily. In terms of assembly, homodimer. The cofactor is Zn(2+).

It is found in the cytoplasm. The enzyme catalyses tRNA(Met) + L-methionine + ATP = L-methionyl-tRNA(Met) + AMP + diphosphate. In terms of biological role, is required not only for elongation of protein synthesis but also for the initiation of all mRNA translation through initiator tRNA(fMet) aminoacylation. In Burkholderia pseudomallei (strain 1710b), this protein is Methionine--tRNA ligase.